A 346-amino-acid polypeptide reads, in one-letter code: Lipooligosaccharide heptosyltransferase 2 (346 aa).

This sequence belongs to the glycosyltransferase 9 family.

It carries out the reaction an L-alpha-D-Hep-(1-&gt;5)-[alpha-Kdo-(2-&gt;4)]-alpha-Kdo-(2-&gt;6)-lipid A + ADP-L-glycero-beta-D-manno-heptose = an L-alpha-D-Hep-(1-&gt;3)-L-alpha-D-Hep-(1-&gt;5)-[alpha-Kdo-(2-&gt;4)]-alpha-Kdo-(2-&gt;6)-lipid A + ADP + H(+). It functions in the pathway bacterial outer membrane biogenesis; LOS core biosynthesis. Its function is as follows. Glycosyltransferase involved in the biosynthesis of the core oligosaccharide region of lipooligosaccharide (LOS). Catalyzes the addition of a heptose unit to the heptosyl-Kdo2-lipid A module. This chain is Lipooligosaccharide heptosyltransferase 2 (waaF), found in Haemophilus influenzae (strain ATCC 51907 / DSM 11121 / KW20 / Rd).